The following is a 196-amino-acid chain: ATP-dependent Clp protease proteolytic subunit (196 aa).

Ser-101 (nucleophile) is an active-site residue. Residue His-126 is part of the active site.

This sequence belongs to the peptidase S14 family. Component of the chloroplastic Clp protease core complex.

The protein resides in the plastid. Its subcellular location is the chloroplast stroma. The enzyme catalyses Hydrolysis of proteins to small peptides in the presence of ATP and magnesium. alpha-casein is the usual test substrate. In the absence of ATP, only oligopeptides shorter than five residues are hydrolyzed (such as succinyl-Leu-Tyr-|-NHMec, and Leu-Tyr-Leu-|-Tyr-Trp, in which cleavage of the -Tyr-|-Leu- and -Tyr-|-Trp bonds also occurs).. Functionally, cleaves peptides in various proteins in a process that requires ATP hydrolysis. Has a chymotrypsin-like activity. Plays a major role in the degradation of misfolded proteins. This is ATP-dependent Clp protease proteolytic subunit from Arabis hirsuta (Hairy rock-cress).